We begin with the raw amino-acid sequence, 1174 residues long: MAAQEDRLDSFGMQHGILLSSSPSLQPPYNHQEYAWDFQRYLNKLQSLRPSDSESFRTEINLLLDQLISQDYTPGVTGIGQEEVCAILVQACRLVQHNQEHLVSKVCQLVHYLLNRLQVIVDEQNLDFLLAFSISALKQCSSWTHADVLHALAALVYNNGSKCQKYLNELLGPTGILVNLCDPSQPDPELWREAIHCMANLCLGVPGHPYLDEPYRMTCFKNFLTVLQTPKPNIVDDIAVCTLLQNALKGIQSLLNGSKIKLLETGQLGSLLAVLKKYMFHGLPGLSIEMPTVLYPTPLAQYDGRSPTKPEQPEAAVNQPTWSKKKRKAGKQKKGHQGEESKEELKNEIGAEINKDLEKMKLCSGEAQHSLYLGPQKSPLDPHQGQVGKDHFSPQVQRYKKINSSDSEYSDAEGSLQNKIRSFQAKVRQGALSCFLSTIKSIEKKVLYGYWSAFVPDISGIGSPQSVSLMTIALKDSSPKTRACALQVLSAILDGSKQFLSVADDASDHKRAFTPLSVTLASSIRELHRCLLLAIVAESSAQTLTQIIKCLANLVSNAPYHRLKPGLLTRVWNQIKPYIRNKDVNVRVSSLTLLGAIVSAQVSLPEVQLLLQQPLYSLSQNSGSATPSDPESNRKESMLEGGKKNGLHSEHSQSCWLIRLCITLVVEPREDSYSDSEPSSTPAVMYEPSPVRLEALQVLACLVKGCFNMAQSYLIELGEVACKCMQETDASIQLHGAKLLEELGTGIVQQQKPDSIVPINLMVPINQAVTFWNMILNGPLPAALQNEQHPTLQTSACDALSSVLPEAFSNLPNDRQILCITLLLGLNHSENPLVKAAAARALGVYILFPCLRQDVMFVADTANAILMCLSDRSPNVRAKAAWSLGNLTDSLIVNMEAMGQSFQEEFSDMLLLKMLWAATEASKDKDKVKSNAVRALGNLLHFLQPYHIVKPRFCESIECAIQALVSTVLGDGTMKVKWNACYALGNVFKNTALPLGKATWTAAAYNALTTVVKACKNFKVRIKSAMALSIPFSREQYGSTEQYCDIWNALVTALQKSEDTEDFLEFKYSASLREQICQALIHLLSLASQEDLPRIRKTLLEKGDSIRNYVLHYVKSEVQGDESQREHQDRGKMLQRAIEHIRGFEELPGSNKGLIEVAYFEAILVSCDKEMEAL.

An HEAT 1 repeat occupies 168-207 (NELLGPTGILVNLCDPSQPDPELWREAIHCMANLCLGVPG). 2 disordered regions span residues 304–346 (GRSP…EELK) and 373–392 (LGPQ…KDHF). Positions 323-335 (SKKKRKAGKQKKG) are enriched in basic residues. Residues 336–346 (HQGEESKEELK) show a composition bias toward basic and acidic residues. HEAT repeat units lie at residues 460–498 (GIGS…GSKQ), 523–560 (SIRE…NAPY), and 566–603 (GLLT…AQVS). Residues 619–648 (SQNSGSATPSDPESNRKESMLEGGKKNGLH) are disordered. The segment covering 631–648 (ESNRKESMLEGGKKNGLH) has biased composition (basic and acidic residues).

In Xenopus laevis (African clawed frog), this protein is HEAT repeat-containing protein 6 (heatr6).